A 658-amino-acid polypeptide reads, in one-letter code: Vertnin (658 aa).

This sequence belongs to the vertnin family.

The protein resides in the nucleus. Acts as a transcription factor that regulates development of thoracic vertebrae. The polypeptide is Vertnin (VRTN) (Bos taurus (Bovine)).